A 137-amino-acid polypeptide reads, in one-letter code: Small ribosomal subunit protein uS9 (137 aa).

Residues 118–137 (KERKKYGLRKARKAPQYSKR) form a disordered region.

Belongs to the universal ribosomal protein uS9 family.

This is Small ribosomal subunit protein uS9 from Acaryochloris marina (strain MBIC 11017).